The chain runs to 331 residues: MCEKIAAGILGTGSYLPEKILTNFDLEKMVDTSDEWITTRTGIKERRIADPSQATSDLATEASKRALEDANLKPEDLDMIIVATVTPDMNFPSTACIVQANLGALNAAAFDISVGCSGFIYGLAIAQQFVETGMYRNVLVIGAETLSKIINWKDRNTCVLFGDGAGAAVVGRVESGYGILGSYLGADGTGGKYLYMPAGGSRMPASHETVEKNLHTIFMEGQEVFKFAVKVMDSATIEVLERCGLTPEDIDMLIPHQANTRIIEAARKRLKLTNDKVYINLDKYGNTSAASVAIALDEAYRKGLIKKGDIILTVAFGAGLTWASSVIKWSK.

Active-site residues include Cys-116 and His-256. The tract at residues 257–261 is ACP-binding; it reads QANTR. The active site involves Asn-286.

The protein belongs to the thiolase-like superfamily. FabH family. As to quaternary structure, homodimer.

It is found in the cytoplasm. It carries out the reaction malonyl-[ACP] + acetyl-CoA + H(+) = 3-oxobutanoyl-[ACP] + CO2 + CoA. The protein operates within lipid metabolism; fatty acid biosynthesis. In terms of biological role, catalyzes the condensation reaction of fatty acid synthesis by the addition to an acyl acceptor of two carbons from malonyl-ACP. Catalyzes the first condensation reaction which initiates fatty acid synthesis and may therefore play a role in governing the total rate of fatty acid production. Possesses both acetoacetyl-ACP synthase and acetyl transacylase activities. Its substrate specificity determines the biosynthesis of branched-chain and/or straight-chain of fatty acids. The chain is Beta-ketoacyl-[acyl-carrier-protein] synthase III from Caldanaerobacter subterraneus subsp. tengcongensis (strain DSM 15242 / JCM 11007 / NBRC 100824 / MB4) (Thermoanaerobacter tengcongensis).